A 361-amino-acid chain; its full sequence is Molybdenum import ATP-binding protein ModC (361 aa).

In terms of domain architecture, ABC transporter spans M1–Q228. Residue G31–T38 participates in ATP binding. A Mop domain is found at G289 to D356.

This sequence belongs to the ABC transporter superfamily. Molybdate importer (TC 3.A.1.8) family. The complex is composed of two ATP-binding proteins (ModC), two transmembrane proteins (ModB) and a solute-binding protein (ModA).

The protein resides in the cell inner membrane. It carries out the reaction molybdate(out) + ATP + H2O = molybdate(in) + ADP + phosphate + H(+). In terms of biological role, part of the ABC transporter complex ModABC involved in molybdenum import. Responsible for energy coupling to the transport system. The sequence is that of Molybdenum import ATP-binding protein ModC from Shewanella sp. (strain MR-7).